The chain runs to 422 residues: UDP-N-acetylglucosamine 1-carboxyvinyltransferase (422 aa).

K22–N23 is a binding site for phosphoenolpyruvate. R94 is a UDP-N-acetyl-alpha-D-glucosamine binding site. C118 serves as the catalytic Proton donor. The residue at position 118 (C118) is a 2-(S-cysteinyl)pyruvic acid O-phosphothioketal. UDP-N-acetyl-alpha-D-glucosamine is bound by residues R123–L127, D309, and L331.

It belongs to the EPSP synthase family. MurA subfamily.

Its subcellular location is the cytoplasm. It carries out the reaction phosphoenolpyruvate + UDP-N-acetyl-alpha-D-glucosamine = UDP-N-acetyl-3-O-(1-carboxyvinyl)-alpha-D-glucosamine + phosphate. It functions in the pathway cell wall biogenesis; peptidoglycan biosynthesis. Functionally, cell wall formation. Adds enolpyruvyl to UDP-N-acetylglucosamine. This is UDP-N-acetylglucosamine 1-carboxyvinyltransferase from Sulfurimonas denitrificans (strain ATCC 33889 / DSM 1251) (Thiomicrospira denitrificans (strain ATCC 33889 / DSM 1251)).